The primary structure comprises 101 residues: Small ribosomal subunit protein uS14 (101 aa).

A disordered region spans residues 1 to 21 (MAKTSSVEKNNRRRKLADQYG).

This sequence belongs to the universal ribosomal protein uS14 family. Part of the 30S ribosomal subunit. Contacts proteins S3 and S10.

Its function is as follows. Binds 16S rRNA, required for the assembly of 30S particles and may also be responsible for determining the conformation of the 16S rRNA at the A site. The chain is Small ribosomal subunit protein uS14 from Mesorhizobium japonicum (strain LMG 29417 / CECT 9101 / MAFF 303099) (Mesorhizobium loti (strain MAFF 303099)).